The chain runs to 76 residues: EIPQNLGSDIPHDIIKLPNGQWCKTPGALCSSRSECCKAKHSDSVTYSSGCSRQWSDQQGLFINQCRTCNVESSMC.

4 disulfide bridges follow: cysteine 23-cysteine 37, cysteine 30-cysteine 51, cysteine 36-cysteine 66, and cysteine 69-cysteine 76.

This sequence belongs to the neurotoxin 21 family. Expressed by the venom gland.

It localises to the secreted. In terms of biological role, neurotoxin with probable ion channel impairing activity. In vivo, is both paralytic and lethal, when injected into lepidopteran larvae. The chain is U1-cyrtautoxin-As1d from Apomastus schlingeri (Trap-door spider).